The following is a 163-amino-acid chain: Superoxide dismutase [Mn] (163 aa).

His-2, His-50, Asp-134, and His-138 together coordinate Mn(2+).

The protein belongs to the iron/manganese superoxide dismutase family. Mn(2+) is required as a cofactor.

It carries out the reaction 2 superoxide + 2 H(+) = H2O2 + O2. Its function is as follows. Destroys superoxide anion radicals which are normally produced within the cells and which are toxic to biological systems. The sequence is that of Superoxide dismutase [Mn] (sodA) from Mycobacterium kansasii.